The primary structure comprises 444 residues: 23S rRNA (uracil(1939)-C(5))-methyltransferase RlmD (444 aa).

Positions 5 to 67 (RNRFDRTPFQ…RHFDEAKTVE (63 aa)) constitute a TRAM domain. Residues cysteine 80, cysteine 86, cysteine 89, and cysteine 168 each coordinate [4Fe-4S] cluster. Residues glutamine 276, phenylalanine 305, asparagine 310, glutamate 326, aspartate 353, and aspartate 374 each coordinate S-adenosyl-L-methionine. Cysteine 400 (nucleophile) is an active-site residue.

This sequence belongs to the class I-like SAM-binding methyltransferase superfamily. RNA M5U methyltransferase family. RlmD subfamily.

The catalysed reaction is uridine(1939) in 23S rRNA + S-adenosyl-L-methionine = 5-methyluridine(1939) in 23S rRNA + S-adenosyl-L-homocysteine + H(+). Catalyzes the formation of 5-methyl-uridine at position 1939 (m5U1939) in 23S rRNA. The polypeptide is 23S rRNA (uracil(1939)-C(5))-methyltransferase RlmD (Xanthomonas oryzae pv. oryzae (strain MAFF 311018)).